We begin with the raw amino-acid sequence, 424 residues long: Zygote arrest protein 1 (424 aa).

2 disordered regions span residues 125–175 (RTLQ…PMRF) and 196–313 (GPGP…SPEL). Over residues 141 to 150 (GAEGTTGGGS) the composition is skewed to gly residues. Over residues 289 to 298 (RARDGGDGRE) the composition is skewed to basic and acidic residues. The 3CxxC-type zinc finger occupies 326 to 409 (KYGYYHCKDC…RQDLCGRCKG (84 aa)).

It belongs to the ZAR1 family. As to quaternary structure, interacts with YBX2. In terms of processing, ubiquitinated and degradaded by the proteasome during oocyte meiotic maturation, leading to MARDO (mitochondria-associated ribonucleoprotein domain) membraneless compartment dissolution. Ovary and testis.

The protein resides in the cytoplasm. Its subcellular location is the cytoplasmic ribonucleoprotein granule. MRNA-binding protein that mediates formation of MARDO (mitochondria-associated ribonucleoprotein domain), a membraneless compartment that stores maternal mRNAs in oocytes. MARDO assembly around mitochondria is directed by an increase in mitochondrial membrane potential during oocyte growth. Promotes formation of MARDO phase-separated membraneless compartment by undergoing liquid-liquid phase separation upon binding to maternal mRNAs. Binds to the 3'-UTR of maternal mRNAs. Maternal mRNAs stored in the MARDO are translationally repressed. Essential for female fertility and oocyte-to-embryo transition by coordinating maternal mRNA storage, translation and degradation. In Homo sapiens (Human), this protein is Zygote arrest protein 1.